The sequence spans 328 residues: NADH-cytochrome b5 reductase-like protein (328 aa).

In terms of domain architecture, FAD-binding FR-type spans 76-184 (DKWLEFKLQD…KGPVEKFKYS (109 aa)). The residue at position 201 (threonine 201) is a Phosphothreonine.

Belongs to the flavoprotein pyridine nucleotide cytochrome reductase family. FAD serves as cofactor.

It localises to the mitochondrion. It carries out the reaction 2 Fe(III)-[cytochrome b5] + NADH = 2 Fe(II)-[cytochrome b5] + NAD(+) + H(+). Desaturation and elongation of fatty acids. The sequence is that of NADH-cytochrome b5 reductase-like protein (CBR2) from Arabidopsis thaliana (Mouse-ear cress).